The chain runs to 491 residues: 3-octaprenyl-4-hydroxybenzoate carboxy-lyase (491 aa).

A Mn(2+)-binding site is contributed by Asn172. Residues 175–177 (IYR), 189–191 (RWL), and 194–195 (RG) contribute to the prenylated FMN site. A Mn(2+)-binding site is contributed by Glu238. Asp287 (proton donor) is an active-site residue.

Belongs to the UbiD family. In terms of assembly, homohexamer. It depends on prenylated FMN as a cofactor. The cofactor is Mn(2+).

Its subcellular location is the cell membrane. The catalysed reaction is a 4-hydroxy-3-(all-trans-polyprenyl)benzoate + H(+) = a 2-(all-trans-polyprenyl)phenol + CO2. The protein operates within cofactor biosynthesis; ubiquinone biosynthesis. Its function is as follows. Catalyzes the decarboxylation of 3-octaprenyl-4-hydroxy benzoate to 2-octaprenylphenol, an intermediate step in ubiquinone biosynthesis. This chain is 3-octaprenyl-4-hydroxybenzoate carboxy-lyase, found in Histophilus somni (strain 129Pt) (Haemophilus somnus).